Consider the following 554-residue polypeptide: MKHHLTPLDATQLDSWRALAAHRQELQDFRMRQAFIDDPERFKRFSFSACGLFLDFSKNLIRQDTIDLLVKLAEEARLSDAIRAMFDGEAINASERRPVLHTALRRPIGDKVLVDGVDVMPEVHRVLHQMTELVGYVHNGLWRGYTEKPITDVVNIGIGGSFLGPQLVSEALLPFAQKGVRCHYLANIDGSEFHELASRLNAETTLFIVSSKSFGTLETLKNAQAARAWYLAQGGTEEELYRHFIAVSSNKEAAIAFGIREENIFPMWDWVGGRYSLWSAIGLPIAMSIGISNFKELLSGAYNMDQHFQTAPFERNIPVLLGLLGVWYGDFWGANSHAILPYDYYLRNITDHLQQLDMESNGKSVRQDGTPVTSGTGPVIWGGVGCNGQHAYHQLLHQGTQLIPADFIVPVSSYNPVADHHQWLYANCLSQSQALMLGKSREEAEAELRAKGLPEAEVQRLAPHKVIPGNRPSNTLVVERISARRLGALIAMYEHKVYVQSILWGINAFDQWGVELGKELGKGVYSRLVGSEETPAEDASTQGLIDFFRGRHRG.

Glu359 serves as the catalytic Proton donor. Catalysis depends on residues His390 and Lys518.

This sequence belongs to the GPI family.

The protein resides in the cytoplasm. The enzyme catalyses alpha-D-glucose 6-phosphate = beta-D-fructose 6-phosphate. It functions in the pathway carbohydrate biosynthesis; gluconeogenesis. It participates in carbohydrate degradation; glycolysis; D-glyceraldehyde 3-phosphate and glycerone phosphate from D-glucose: step 2/4. In terms of biological role, catalyzes the reversible isomerization of glucose-6-phosphate to fructose-6-phosphate. The polypeptide is Glucose-6-phosphate isomerase (Pseudomonas aeruginosa (strain LESB58)).